Consider the following 894-residue polypeptide: Translation factor GUF1 homolog, mitochondrial (894 aa).

Positions 157–189 (EDEGLDGGPPPGMEAKKSSSSSSSNNVHSNCSD) are disordered. The span at 174–188 (SSSSSSSNNVHSNCS) shows a compositional bias: low complexity. Positions 199–376 (ENIRNFCILA…RIVSEIPSPA (178 aa)) constitute a tr-type G domain. GTP is bound by residues 208-215 (AHIDSGKS), 269-273 (DTPGH), and 323-326 (NKID). Positions 649-674 (DHDDCNDNGGSNSDDRSDRSGKNPPD) are disordered.

The protein belongs to the TRAFAC class translation factor GTPase superfamily. Classic translation factor GTPase family. LepA subfamily.

The protein resides in the mitochondrion inner membrane. The catalysed reaction is GTP + H2O = GDP + phosphate + H(+). Its function is as follows. Promotes mitochondrial protein synthesis. May act as a fidelity factor of the translation reaction, by catalyzing a one-codon backward translocation of tRNAs on improperly translocated ribosomes. Binds to mitochondrial ribosomes in a GTP-dependent manner. The protein is Translation factor GUF1 homolog, mitochondrial of Plasmodium knowlesi (strain H).